A 238-amino-acid polypeptide reads, in one-letter code: Glycerol-3-phosphate acyltransferase (238 aa).

The next 6 membrane-spanning stretches (helical) occupy residues 5-25 (VIFG…SINF), 61-81 (FLVF…SAIL), 88-108 (FGAV…VFPI), 125-145 (IASL…AMIF), 149-169 (IVSL…IIPW), and 194-214 (AWYL…FTHI).

It belongs to the PlsY family. In terms of assembly, probably interacts with PlsX.

The protein localises to the cell membrane. The catalysed reaction is an acyl phosphate + sn-glycerol 3-phosphate = a 1-acyl-sn-glycero-3-phosphate + phosphate. Its pathway is lipid metabolism; phospholipid metabolism. Functionally, catalyzes the transfer of an acyl group from acyl-phosphate (acyl-PO(4)) to glycerol-3-phosphate (G3P) to form lysophosphatidic acid (LPA). This enzyme utilizes acyl-phosphate as fatty acyl donor, but not acyl-CoA or acyl-ACP. This Mycoplasma mobile (strain ATCC 43663 / 163K / NCTC 11711) (Mesomycoplasma mobile) protein is Glycerol-3-phosphate acyltransferase.